The chain runs to 316 residues: uncharacterized protein (316 aa).

It belongs to the chlamydial CPn_0441/CT_007/TC_0275 family.

This is an uncharacterized protein from Chlamydia muridarum (strain MoPn / Nigg).